Reading from the N-terminus, the 318-residue chain is MYLINLLAMIIPVLLAVAFLTLLERKVLGYMQLRKGPNIVGPYGLLQPIADAVKLFTKEPLQPLTSSPMLFIIAPTLALTLALTMWTPLPMPYPLMNMNLSMLFILALSSLAVYTIMWSGWASNSKYALIGALRAVAQTISYEVTLAIIILSLLLMNGSFTLLSMTTTQEYIWLLIPSWPLAMMWFISTLAETNRAPFDLTEGESELVSGFNVEYAGGPFALFFLAEYANIIMMNALTIILFLGAYHNPMVPELYTINFTTKTLLFTAFFLWIRASYPRFRYDQLMHLLWKNFLPLTLVMCMWHVALPIMLAGIPPQT.

8 helical membrane passes run 3 to 23, 69 to 89, 102 to 122, 144 to 164, 171 to 191, 222 to 242, 253 to 273, and 294 to 314; these read LINL…LTLL, MLFI…WTPL, MLFI…SGWA, VTLA…TLLS, YIWL…STLA, LFFL…IILF, ELYT…FLWI, and LPLT…LAGI.

Belongs to the complex I subunit 1 family. In terms of assembly, core subunit of respiratory chain NADH dehydrogenase (Complex I) which is composed of 45 different subunits.

It localises to the mitochondrion inner membrane. It carries out the reaction a ubiquinone + NADH + 5 H(+)(in) = a ubiquinol + NAD(+) + 4 H(+)(out). Its function is as follows. Core subunit of the mitochondrial membrane respiratory chain NADH dehydrogenase (Complex I) which catalyzes electron transfer from NADH through the respiratory chain, using ubiquinone as an electron acceptor. Essential for the catalytic activity and assembly of complex I. The polypeptide is NADH-ubiquinone oxidoreductase chain 1 (MT-ND1) (Murina florium (Flores tube-nosed bat)).